Here is a 611-residue protein sequence, read N- to C-terminus: Zinc metalloproteinase-disintegrin-like ohanin (611 aa).

The N-terminal stretch at Met1–Ser20 is a signal peptide. The propeptide occupies Ile21–Ile187. A Peptidase M12B domain is found at Lys198 to Pro393. Asn217 and Asn260 each carry an N-linked (GlcNAc...) asparagine glycan. Cystine bridges form between Cys307–Cys388, Cys347–Cys372, and Cys349–Cys354. Residue His332 participates in Zn(2+) binding. Glu333 is a catalytic residue. Positions 336 and 342 each coordinate Zn(2+). Residue Asn395 is glycosylated (N-linked (GlcNAc...) asparagine). The Disintegrin domain occupies Asn401–Asn487. 14 cysteine pairs are disulfide-bonded: Cys404–Cys433, Cys415–Cys428, Cys417–Cys423, Cys427–Cys450, Cys441–Cys447, Cys446–Cys472, Cys459–Cys479, Cys466–Cys498, Cys491–Cys503, Cys510–Cys560, Cys525–Cys578, Cys538–Cys548, Cys555–Cys603, and Cys597–Cys608. Residues Glu465 to Asp467 carry the D/ECD-tripeptide motif. Asn528 is a glycosylation site (N-linked (GlcNAc...) asparagine).

This sequence belongs to the venom metalloproteinase (M12B) family. P-III subfamily. P-IIIa sub-subfamily. Monomer. The cofactor is Zn(2+). In terms of tissue distribution, expressed by the venom gland.

It localises to the secreted. With respect to regulation, inhibited by EDTA, but not by PMSF. In terms of biological role, snake venom zinc metalloproteinase that has hemorrhagic activity. Inhibits ADP-, TMVA- and stejnulxin-induced platelet aggregation in a dose-dependent manner (on washed platelet, but not on platelet rich plasm). Also specifically degrades alpha-chain of fibrinogen (FGA). The chain is Zinc metalloproteinase-disintegrin-like ohanin from Ophiophagus hannah (King cobra).